The sequence spans 130 residues: L-aspartate semialdehyde sulfurtransferase iron-sulfur subunit (130 aa).

2 consecutive 4Fe-4S ferredoxin-type domains span residues 72-101 and 102-130; these read RPIH…FDET and WSLC…KLGE. [4Fe-4S] cluster is bound by residues Cys-81, Cys-84, Cys-87, Cys-91, Cys-111, Cys-114, Cys-117, and Cys-121.

May form a complex with MA_1821. It depends on [4Fe-4S] cluster as a cofactor.

The protein operates within amino-acid biosynthesis. Required for O-acetylhomoserine sulfhydrylase (OAHS)-independent homocysteine (Hcy) biosynthesis. Together with MA_1821, catalyzes the condensation of sulfide with aspartate semialdehyde to generate homocysteine. May be involved in the reduction of the disulfide formed in MA_1821. The chain is L-aspartate semialdehyde sulfurtransferase iron-sulfur subunit from Methanosarcina acetivorans (strain ATCC 35395 / DSM 2834 / JCM 12185 / C2A).